A 397-amino-acid chain; its full sequence is Succinate--CoA ligase [ADP-forming] subunit beta (397 aa).

Residues Lys9–Ala254 enclose the ATP-grasp domain. ATP contacts are provided by residues Lys46, Gly53 to Gly55, Glu109, Ser112, and Glu117. 2 residues coordinate Mg(2+): Asn209 and Asp223. Substrate contacts are provided by residues Asn274 and Gly331 to Met333.

This sequence belongs to the succinate/malate CoA ligase beta subunit family. As to quaternary structure, heterotetramer of two alpha and two beta subunits. Mg(2+) serves as cofactor.

It catalyses the reaction succinate + ATP + CoA = succinyl-CoA + ADP + phosphate. The enzyme catalyses GTP + succinate + CoA = succinyl-CoA + GDP + phosphate. It functions in the pathway carbohydrate metabolism; tricarboxylic acid cycle; succinate from succinyl-CoA (ligase route): step 1/1. Succinyl-CoA synthetase functions in the citric acid cycle (TCA), coupling the hydrolysis of succinyl-CoA to the synthesis of either ATP or GTP and thus represents the only step of substrate-level phosphorylation in the TCA. The beta subunit provides nucleotide specificity of the enzyme and binds the substrate succinate, while the binding sites for coenzyme A and phosphate are found in the alpha subunit. The sequence is that of Succinate--CoA ligase [ADP-forming] subunit beta from Paracoccus denitrificans (strain Pd 1222).